A 341-amino-acid polypeptide reads, in one-letter code: MGSTCVRIAIDAMGGDHAPNEIVAGAVRASEELGVKVLLVGDPQQIASALPPKTNLERVEIVPAEEAIAMDEEPLNAVRRKRKASINVAMDLVKREQADAIFSAGHSGAAMASALLRLGRLPGVDRPAIGTVFPTIKAGKPVLILDVGANVDCRPKFLEQFAVIGSIYSQYVLGTGEPKVGLLNIGEEDTKGNELALRTHQLLKDNSNINFIGNAEGRDVLSGEFDVIVCDGFVGNILLKFAEAIGGVILQILREELPQGLHGQIGTAILKPNLKRIKQRMDHAEHGGALLLGVSGVCLIGHGSSQAPSVFNAIRMAKEAVDNQVMQQLQSQYEILHSTSD.

Belongs to the PlsX family. In terms of assembly, homodimer. Probably interacts with PlsY.

It is found in the cytoplasm. It catalyses the reaction a fatty acyl-[ACP] + phosphate = an acyl phosphate + holo-[ACP]. The protein operates within lipid metabolism; phospholipid metabolism. Functionally, catalyzes the reversible formation of acyl-phosphate (acyl-PO(4)) from acyl-[acyl-carrier-protein] (acyl-ACP). This enzyme utilizes acyl-ACP as fatty acyl donor, but not acyl-CoA. This chain is Phosphate acyltransferase, found in Nostoc sp. (strain PCC 7120 / SAG 25.82 / UTEX 2576).